A 289-amino-acid polypeptide reads, in one-letter code: Protease HtpX homolog (289 aa).

2 helical membrane-spanning segments follow: residues 3-23 (IVGT…WFFF) and 28-48 (TILA…YKVG). Histidine 129 contributes to the Zn(2+) binding site. Residue glutamate 130 is part of the active site. Histidine 133 is a Zn(2+) binding site. 2 consecutive transmembrane segments (helical) span residues 144-164 (LGQG…LFSG) and 172-192 (FLAI…VLAI). Glutamate 197 contacts Zn(2+). Residues 222–250 (SQGNEQAAQQQRQRTSRGRGRRQRGQRND) are disordered. A compositionally biased stretch (basic residues) spans 235 to 246 (RTSRGRGRRQRG).

Belongs to the peptidase M48B family. Zn(2+) is required as a cofactor.

Its subcellular location is the cell membrane. This is Protease HtpX homolog from Halobacterium salinarum (strain ATCC 700922 / JCM 11081 / NRC-1) (Halobacterium halobium).